A 337-amino-acid polypeptide reads, in one-letter code: G-protein coupled receptor 26 (337 aa).

Topologically, residues 1–10 are extracellular; it reads MNSWDAGLAG. The chain crosses the membrane as a helical span at residues 11-31; the sequence is LLVGTIGVSLLSNGLVLLCLL. At 32–47 the chain is on the cytoplasmic side; the sequence is HSADIRRQAPALFTLN. A helical membrane pass occupies residues 48–68; sequence LTCGNLLCTVVNMPLTLAGVV. Residues 69–81 are Extracellular-facing; sequence AQRQPAGDRLCRL. Cys-79 and Cys-156 form a disulfide bridge. Residues 82 to 102 form a helical membrane-spanning segment; that stretch reads AAFLDTFLAANSMLSMAALSI. Topologically, residues 103 to 123 are cytoplasmic; sequence DRWVAVVFPLSYRAKMRLRDA. Residues 124–144 form a helical membrane-spanning segment; the sequence is AFMVAYTWLHALTFPATALAL. The Extracellular portion of the chain corresponds to 145–168; the sequence is SWLGFHQLYASCTLCSRRPDERLR. A helical membrane pass occupies residues 169–189; sequence FAVFTSAFHALSFLLSFIVLC. The Cytoplasmic segment spans residues 190–245; it reads FTYLKVLKVARFHCKRIDVITMQTLVLLVDIHPSVRERCLEEQKRRRQRATKKIST. Residues 246–266 form a helical membrane-spanning segment; sequence FIGTFLVCFAPYVITRLVELF. Residues 267 to 276 are Extracellular-facing; the sequence is STAPIDSHWG. Residues 277-297 traverse the membrane as a helical segment; it reads VLSKCLAYSKAASDPFVYSLL. At 298–337 the chain is on the cytoplasmic side; sequence RHQYRRSCKELLNRIFNRRSIHSVGLTGDSHSQNILPVSE.

The protein belongs to the G-protein coupled receptor 1 family. As to expression, detected in extracts of several brain regions including striatum, pons, cerebellum and cortex. Not detected in numerous peripheral tissue extracts, except in testis. In the brain, detected in cortical structures including the anterior cingulate area, posterior cingulate and the frontoparietal, somatosensory and piriform cortices. Prominent also in the olfactory tubercle, the islands of Calleja, ventromedial and posterior nuclei of the hypothalamus, the medial septal nucleus, nucleus of the diagonal band and the ventral tegmental area. Localized also to hippocampal structures, with signals strongest over the CA2 and CA3 regions of Ammon's horn and less so over the dentate gyrus. Expressed in the caudate putamen only in its most caudal portion, with a decreasing gradient of signal from the dorsal to ventral aspect. Strong expression associated with a single pontine structure, the inferior olivary nucleus.

It is found in the cell membrane. Its function is as follows. Orphan receptor. Displays a significant level of constitutive activity. Its effect is mediated by G(s)-alpha protein that stimulate adenylate cyclase, resulting in an elevation of intracellular cAMP. The sequence is that of G-protein coupled receptor 26 (Gpr26) from Rattus norvegicus (Rat).